The sequence spans 95 residues: Co-chaperonin GroES (95 aa).

Belongs to the GroES chaperonin family. As to quaternary structure, heptamer of 7 subunits arranged in a ring. Interacts with the chaperonin GroEL.

It localises to the cytoplasm. Functionally, together with the chaperonin GroEL, plays an essential role in assisting protein folding. The GroEL-GroES system forms a nano-cage that allows encapsulation of the non-native substrate proteins and provides a physical environment optimized to promote and accelerate protein folding. GroES binds to the apical surface of the GroEL ring, thereby capping the opening of the GroEL channel. The sequence is that of Co-chaperonin GroES from Geobacter sulfurreducens (strain ATCC 51573 / DSM 12127 / PCA).